Here is a 136-residue protein sequence, read N- to C-terminus: uncharacterized protein (136 aa).

Residues 14–34 form a helical membrane-spanning segment; that stretch reads ASVFAFFVLFLFCLKIILVLF.

It localises to the membrane. This is an uncharacterized protein from Mycoplasma genitalium (strain ATCC 33530 / DSM 19775 / NCTC 10195 / G37) (Mycoplasmoides genitalium).